Reading from the N-terminus, the 726-residue chain is Transferrin (726 aa).

The first 16 residues, Met1–Ala16, serve as a signal peptide directing secretion. Transferrin-like domains are found at residues Tyr29 to Thr367 and Val374 to Ala719. 2 disulfides stabilise this stretch: Cys32–Cys63 and Cys41–Cys54. Fe(3+)-binding residues include Asp78 and Tyr111. 4 cysteine pairs are disulfide-bonded: Cys135–Cys231, Cys184–Cys210, Cys207–Cys216, and Cys274–Cys287. Thr137, Arg141, Val143, and Gly144 together coordinate hydrogencarbonate. Asn162 carries an N-linked (GlcNAc...) asparagine glycan. Residue Tyr225 participates in Fe(3+) binding. Residues Asn337 and Asn358 are each glycosylated (N-linked (GlcNAc...) asparagine). 2 cysteine pairs are disulfide-bonded: Cys377–Cys414 and Cys387–Cys405. Asp429 and Tyr457 together coordinate Fe(3+). Cys481 and Cys562 are joined by a disulfide. Hydrogencarbonate-binding residues include Thr483, Arg487, Ala489, and Gly490. Residues Tyr573 and His642 each coordinate Fe(3+).

The protein belongs to the transferrin family.

Its subcellular location is the secreted. In terms of biological role, transferrins are iron binding transport proteins which bind Fe(3+) ion in association with the binding of an anion, usually bicarbonate. The polypeptide is Transferrin (Blaberus discoidalis (Tropical cockroach)).